Here is a 419-residue protein sequence, read N- to C-terminus: uncharacterized protein (419 aa).

A run of 13 helical transmembrane segments spans residues 5-25 (MIIV…ALII), 26-46 (AAGV…AQQI), 53-73 (FPML…GGEL), 102-122 (VFGG…SVLI), 144-164 (VIDV…VSGV), 170-190 (FVAG…VCWF), 210-230 (ATLA…ILFL), 234-254 (LATP…LSLL), 274-294 (ATGV…VLTF), 309-329 (ISSP…VGMP), 332-352 (MPPA…TIGL), 360-380 (MMVI…TLFI), and 396-416 (LWPF…IPAL).

It belongs to the YiaN/YgiK family.

The protein localises to the cell inner membrane. This is an uncharacterized protein from Sinorhizobium fredii (strain NBRC 101917 / NGR234).